The following is a 306-amino-acid chain: Putative dihydroorotate dehydrogenase A (fumarate) (306 aa).

Residues Ser-24 and 48-49 (KS) each bind FMN. Residues Lys-48, 72–76 (NAVGL), and Asn-129 each bind substrate. Asn-129 lines the FMN pocket. Cys-132 functions as the Nucleophile in the catalytic mechanism. The FMN site is built by Lys-167 and Ile-192. Substrate is bound at residue 193–194 (NS). Residues Gly-218 and 244-245 (GG) contribute to the FMN site.

It belongs to the dihydroorotate dehydrogenase family. Type 1 subfamily. As to quaternary structure, homodimer. FMN serves as cofactor.

It localises to the cytoplasm. The enzyme catalyses (S)-dihydroorotate + fumarate = orotate + succinate. The protein operates within pyrimidine metabolism; UMP biosynthesis via de novo pathway. Functionally, catalyzes the conversion of dihydroorotate to orotate with fumarate as the electron acceptor. This is Putative dihydroorotate dehydrogenase A (fumarate) (pyrD) from Aeropyrum pernix (strain ATCC 700893 / DSM 11879 / JCM 9820 / NBRC 100138 / K1).